The following is a 218-amino-acid chain: CTP-dependent diacylglycerol kinase 1 (218 aa).

The Lumenal segment spans residues 1-19 (MSTKLTWSQWSKKHEIPRK). A helical transmembrane segment spans residues 20–37 (ALHTSIGFFALLLQGCGY). A topological domain (cytoplasmic) is located at residue His38. A helical membrane pass occupies residues 39-59 (AAQIIPVIEIGFIPAFTGDVI). The Lumenal segment spans residues 60–88 (RFNWPAFSRLYNRVIGPLMRESEKNAWNG). A helical transmembrane segment spans residues 89–109 (VIFYMIGVWIVLKVFPEEIAV). Topologically, residues 110-142 (MSVLLLSWCDTTASTVGRKWGKYTPKIAKNKSL) are cytoplasmic. The chain crosses the membrane as a helical span at residues 143-163 (AGSLGAFVCGVFCCYVYWGLF). Residues 164–179 (RTGPDSLAAQSRIPFP) are Lumenal-facing. Helical transmembrane passes span 180–200 (WLCLINGFIGAFAEAMDVWGL) and 201–217 (DDNLVIPVVSACLLYLI). Position 218 (Met218) is a topological domain, lumenal.

This sequence belongs to the DGK1 family. Ca(2+) is required as a cofactor. The cofactor is Mg(2+).

The protein localises to the endoplasmic reticulum membrane. The protein resides in the nucleus membrane. The catalysed reaction is a 1,2-diacyl-sn-glycerol + CTP = a 1,2-diacyl-sn-glycero-3-phosphate + CDP + H(+). Functionally, CTP-dependent diacylglycerol kinase that catalyzes the phosphorylation of diacylglycerol (DAG) to phosphatidate (PA). Controls phosphatidate levels at the nuclear envelope. Counteracts the activity of PA phosphatase ned1. May be involved in vesicle trafficking between the endoplasmic reticulum and the Golgi apparatus. Involved in pre-tRNA splicing. The protein is CTP-dependent diacylglycerol kinase 1 (ptp4) of Schizosaccharomyces pombe (strain 972 / ATCC 24843) (Fission yeast).